The chain runs to 810 residues: F-BAR domain only protein 2 (810 aa).

The 248-residue stretch at 3 to 250 (MAYFVENFWG…NMANTTVESL (248 aa)) folds into the F-BAR domain. The interval 3–274 (MAYFVENFWG…PGLIEFEECD (272 aa)) is mediates dimerization and binding to membranes enriched in Pi(4,5)-P2 and induces their tubulation. The stretch at 87-156 (HLDLVRKLQE…CVEQERLKKE (70 aa)) forms a coiled coil. A Glycyl lysine isopeptide (Lys-Gly) (interchain with G-Cter in SUMO2) cross-link involves residue K297. The interval 301-352 (DAESVECPDADSLNIPDVDEEGYSIKPETNQNDTKENHFYSSSDSDSEDEEP) is disordered. Phosphoserine is present on S312. T385 is subject to Phosphothreonine. A phosphoserine mark is found at S387, S394, and S403. The interval 404-537 (NEELTKSKPS…VSRGPSPVSL (134 aa)) is disordered. The span at 433-456 (PSLDSSSSSSLTSSSSARPTTPLS) shows a compositional bias: low complexity. A phosphoserine mark is found at S488, S493, S496, S508, S510, S511, and S533. Low complexity predominate over residues 502–521 (PLARAESSSSISSSASLSAA). Residues 521–810 (ANTPTVGVSR…FATGRYLADC (290 aa)) are mediates interaction with DAB2, EPS15, EPS15R and ITSN1. The region spanning 542–809 (TLPVAVALTE…RFATGRYLAD (268 aa)) is the MHD domain.

The protein belongs to the FCHO family. Homodimer; disulfide-linked. May form homotetramer. Interacts with AP2A1. Interacts with EPS15, EPS15R, ITSN1 and ITSN2; recruit those scaffolding proteins which in turn may interact with the adaptor protein complex AP-2 at the plasma membrane. Interacts with DAB2 (via DPF motifs); mediates LDL receptor/LDLR endocytosis. In terms of processing, ubiquitinated. Mainly undergoes monoubiquitination but also polyubiquitination.

Its subcellular location is the membrane. The protein resides in the clathrin-coated pit. Functionally, functions in an early step of clathrin-mediated endocytosis. Has both a membrane binding/bending activity and the ability to recruit proteins essential to the formation of functional clathrin-coated pits. Has a lipid-binding activity with a preference for membranes enriched in phosphatidylserine and phosphoinositides (Pi(4,5) biphosphate) like the plasma membrane. Its membrane-bending activity might be important for the subsequent action of clathrin and adaptors in the formation of clathrin-coated vesicles. Involved in adaptor protein complex AP-2-dependent endocytosis of the transferrin receptor, it also functions in the AP-2-independent endocytosis of the LDL receptor. This is F-BAR domain only protein 2 (FCHO2) from Homo sapiens (Human).